An 81-amino-acid polypeptide reads, in one-letter code: Photosystem I iron-sulfur center (81 aa).

4Fe-4S ferredoxin-type domains lie at 2–31 and 39–68; these read SHAV…MVPW and IASS…IRVY. Residues cysteine 11, cysteine 14, cysteine 17, cysteine 21, cysteine 48, cysteine 51, cysteine 54, and cysteine 58 each coordinate [4Fe-4S] cluster.

In terms of assembly, the cyanobacterial PSI reaction center is composed of one copy each of PsaA,B,C,D,E,F,I,J,K,L,M and X, and forms trimeric complexes. [4Fe-4S] cluster is required as a cofactor.

The protein resides in the cellular thylakoid membrane. The enzyme catalyses reduced [plastocyanin] + hnu + oxidized [2Fe-2S]-[ferredoxin] = oxidized [plastocyanin] + reduced [2Fe-2S]-[ferredoxin]. In terms of biological role, apoprotein for the two 4Fe-4S centers FA and FB of photosystem I (PSI); essential for photochemical activity. FB is the terminal electron acceptor of PSI, donating electrons to ferredoxin. The C-terminus interacts with PsaA/B/D and helps assemble the protein into the PSI complex. Required for binding of PsaD and PsaE to PSI. PSI is a plastocyanin/cytochrome c6-ferredoxin oxidoreductase, converting photonic excitation into a charge separation, which transfers an electron from the donor P700 chlorophyll pair to the spectroscopically characterized acceptors A0, A1, FX, FA and FB in turn. This is Photosystem I iron-sulfur center from Prochlorococcus marinus (strain MIT 9312).